Reading from the N-terminus, the 284-residue chain is NH(3)-dependent NAD(+) synthetase (284 aa).

51–58 (GISGGIDS) is a binding site for ATP. D57 provides a ligand contact to Mg(2+). R148 contributes to the deamido-NAD(+) binding site. An ATP-binding site is contributed by T168. E173 contacts Mg(2+). Deamido-NAD(+) contacts are provided by K181 and D188. Residues K197 and T219 each coordinate ATP. Deamido-NAD(+) is bound at residue 268-269 (HK).

Belongs to the NAD synthetase family. Homodimer.

The catalysed reaction is deamido-NAD(+) + NH4(+) + ATP = AMP + diphosphate + NAD(+) + H(+). It participates in cofactor biosynthesis; NAD(+) biosynthesis; NAD(+) from deamido-NAD(+) (ammonia route): step 1/1. In terms of biological role, catalyzes the ATP-dependent amidation of deamido-NAD to form NAD. Uses ammonia as a nitrogen source. This chain is NH(3)-dependent NAD(+) synthetase, found in Burkholderia mallei (strain NCTC 10247).